The sequence spans 76 residues: Vasotab-TY1 (76 aa).

The signal sequence occupies residues 1-21 (MKFTLFSVLVVLLIATFVAAD). A Kazal-like domain is found at 22-76 (DCPRICTADFRPVCGTPSGGRRSANRTFGNQCSLDSHNCLNKGDTYDKLHDGECK). Intrachain disulfides connect Cys23–Cys60, Cys27–Cys53, and Cys35–Cys75.

In terms of tissue distribution, expressed by the salivary gland.

It is found in the secreted. In terms of biological role, vasodilator protein that inhibits vasoconstriction of isolated rat femoral artery induced by phenylephrine. Since platelet aggregation and vasoconstriction are key hemostatic responses, particularly in small wounds, this protein likely participates in the antihemostatic responses during blood feeding. Blocks L-type calcium channels (Cav1/CACNA1) in left ventricular myocytes isolated from rat hearts. This is Vasotab-TY1 from Tabanus yao (Horsefly).